A 235-amino-acid chain; its full sequence is Small ribosomal subunit protein uS2 (235 aa).

It belongs to the universal ribosomal protein uS2 family.

This is Small ribosomal subunit protein uS2 from Thermoanaerobacter sp. (strain X514).